Here is a 342-residue protein sequence, read N- to C-terminus: S-adenosylmethionine:tRNA ribosyltransferase-isomerase (342 aa).

This sequence belongs to the QueA family. In terms of assembly, monomer.

The protein localises to the cytoplasm. The catalysed reaction is 7-aminomethyl-7-carbaguanosine(34) in tRNA + S-adenosyl-L-methionine = epoxyqueuosine(34) in tRNA + adenine + L-methionine + 2 H(+). Its pathway is tRNA modification; tRNA-queuosine biosynthesis. In terms of biological role, transfers and isomerizes the ribose moiety from AdoMet to the 7-aminomethyl group of 7-deazaguanine (preQ1-tRNA) to give epoxyqueuosine (oQ-tRNA). In Streptococcus agalactiae serotype III (strain NEM316), this protein is S-adenosylmethionine:tRNA ribosyltransferase-isomerase.